Consider the following 241-residue polypeptide: MDAKKAVRVAVVEQVGYREWTEELGSDREWIIQTLQSDIYAAAQKEAAGYGGFVLPIRYDIMLLISSNMGVQEHARVLDAIAGLSKVKVRMASYCGVKPLDAVERAWNALRRREERLIYERCEGEEYTAIAHIDLNNVTAITRAEGPVRTYYEVMDLMAKISKVAEKIGAITQYLGGDNILAVLPLNGSVKETVDMLLVRSDLKAGIGIAPTARASLALAAEALHEIRSKINPGPLVVKAQ.

Belongs to the archaeal-type GTP cyclohydrolase family.

The enzyme catalyses GTP + 3 H2O = 2-amino-5-formylamino-6-(5-phospho-D-ribosylamino)pyrimidin-4(3H)-one + 2 phosphate + 2 H(+). Its function is as follows. Catalyzes the formation of 2-amino-5-formylamino-6-ribofuranosylamino-4(3H)-pyrimidinone ribonucleotide monophosphate and inorganic phosphate from GTP. Also has an independent pyrophosphate phosphohydrolase activity. This chain is GTP cyclohydrolase III, found in Aeropyrum pernix (strain ATCC 700893 / DSM 11879 / JCM 9820 / NBRC 100138 / K1).